Consider the following 483-residue polypeptide: Probable cytosol aminopeptidase (483 aa).

Mn(2+)-binding residues include K252 and D257. K264 is an active-site residue. Mn(2+) is bound by residues D275, D334, and E336. R338 is a catalytic residue.

Belongs to the peptidase M17 family. Requires Mn(2+) as cofactor.

It localises to the cytoplasm. It catalyses the reaction Release of an N-terminal amino acid, Xaa-|-Yaa-, in which Xaa is preferably Leu, but may be other amino acids including Pro although not Arg or Lys, and Yaa may be Pro. Amino acid amides and methyl esters are also readily hydrolyzed, but rates on arylamides are exceedingly low.. The enzyme catalyses Release of an N-terminal amino acid, preferentially leucine, but not glutamic or aspartic acids.. Its function is as follows. Presumably involved in the processing and regular turnover of intracellular proteins. Catalyzes the removal of unsubstituted N-terminal amino acids from various peptides. This chain is Probable cytosol aminopeptidase, found in Legionella pneumophila (strain Paris).